We begin with the raw amino-acid sequence, 423 residues long: DUF21 domain-containing protein At2g14520 (423 aa).

Topologically, residues Met-1–Ser-11 are extracellular. Residues Cys-8–Glu-191 form the CNNM transmembrane domain. A helical transmembrane segment spans residues Phe-12–Leu-32. Residues Thr-33–His-70 are Cytoplasmic-facing. A helical membrane pass occupies residues Leu-71–Leu-91. The Extracellular segment spans residues Asp-92–Leu-94. A helical transmembrane segment spans residues Val-95–Ile-115. Residues Pro-116–Arg-136 lie on the Cytoplasmic side of the membrane. A helical transmembrane segment spans residues Val-137–Leu-157. Topologically, residues Gly-158–Leu-423 are extracellular. In terms of domain architecture, CBS 1 spans Met-210–Val-271. 2 N-linked (GlcNAc...) asparagine glycosylation sites follow: Asn-273 and Asn-322. CBS domains lie at Thr-275 to Val-332 and Pro-356 to Glu-415.

Its subcellular location is the membrane. The sequence is that of DUF21 domain-containing protein At2g14520 (CBSDUF3) from Arabidopsis thaliana (Mouse-ear cress).